Consider the following 62-residue polypeptide: Temporin-La (62 aa).

A signal peptide spans Met-1 to Cys-22. Residues Glu-23–Arg-47 constitute a propeptide that is removed on maturation. Leu-60 is modified (leucine amide).

The protein belongs to the frog skin active peptide (FSAP) family. Temporin subfamily. In terms of tissue distribution, expressed by the skin glands.

The protein localises to the secreted. It localises to the target cell membrane. Functionally, antimicrobial peptide with amphipathic alpha-helical structure that acts against both Gram-positive and Gram-negative bacteria and the fungus Candida albicans. Is active against S.aureus ATCC 25923 (MIC=2.5 ug/ml), S.suis 2 CVCC 606 (MIC=15.6 ug/ml), Salmonella ATCC 20020 (MIC=15.6 ug/ml), P.aeruginosa ATCC 227853 (MIC=60 ug/ml), and C.albicans ATCC10231 (MIC=31.25 ug/ml). Is not active against B.subtilis ADB403, E.coli ATCC 25922, and K.pneumoniae ATCC 700603. Also shows a strong antitumor activity, but no hemolytic activity. The sequence is that of Temporin-La from Aquarana catesbeiana (American bullfrog).